Reading from the N-terminus, the 300-residue chain is Putative zinc finger protein 705EP (300 aa).

The KRAB domain occupies 7 to 78 (VTFEDVAIDF…GREFLQDQNP (72 aa)). A C2H2-type 1; degenerate zinc finger spans residues 172 to 194 (YQCNLCEKAYTNCFHLRRPKMTH). C2H2-type zinc fingers lie at residues 200–222 (YTCHLCRKAFTQCSHLRRHEKTH) and 228–250 (YKCHQCGKAFIQSFNLRRHERTH). Residues 256–278 (YECDNSGKAFSQSSGFRGNKIIH) form a C2H2-type 4; degenerate zinc finger.

It belongs to the krueppel C2H2-type zinc-finger protein family.

The protein localises to the nucleus. Functionally, may be involved in transcriptional regulation. The chain is Putative zinc finger protein 705EP from Homo sapiens (Human).